The chain runs to 208 residues: Small ribosomal subunit protein uS4 (208 aa).

An S4 RNA-binding domain is found at 98-161 (RRLDNVVYRL…RKIPVLAEAQ (64 aa)).

It belongs to the universal ribosomal protein uS4 family. In terms of assembly, part of the 30S ribosomal subunit. Contacts protein S5. The interaction surface between S4 and S5 is involved in control of translational fidelity.

Functionally, one of the primary rRNA binding proteins, it binds directly to 16S rRNA where it nucleates assembly of the body of the 30S subunit. In terms of biological role, with S5 and S12 plays an important role in translational accuracy. The sequence is that of Small ribosomal subunit protein uS4 from Desulfovibrio desulfuricans (strain ATCC 27774 / DSM 6949 / MB).